We begin with the raw amino-acid sequence, 253 residues long: Retinoic acid early-inducible protein 1-beta (253 aa).

The N-terminal stretch at 1–28 is a signal peptide; the sequence is MAKAAVTKRHHFMIQKLLILLSYGYTNG. Cys-37 and Cys-56 are oxidised to a cystine. N-linked (GlcNAc...) asparagine glycans are attached at residues Asn-38, Asn-70, Asn-83, Asn-143, and Asn-156. Cys-90 and Cys-190 are oxidised to a cystine. The disordered stretch occupies residues 198–230; sequence LKQSKEKPRSTSRSPSITQLTSTSPLPPPSHST. The segment covering 211–221 has biased composition (low complexity); that stretch reads SPSITQLTSTS. The GPI-anchor amidated serine moiety is linked to residue Ser-229. The propeptide at 230–253 is removed in mature form; the sequence is TSKKGFISVGLIFISLLFAFAFAM.

This sequence belongs to the NKG2D ligand family. Glycosylated. In terms of tissue distribution, expressed predominantly in embryonic brain.

The protein resides in the cell membrane. Acts as a ligand for KLRK1. This is Retinoic acid early-inducible protein 1-beta (Raet1b) from Mus musculus (Mouse).